A 528-amino-acid polypeptide reads, in one-letter code: Protein spinster homolog 1 (528 aa).

A disordered region spans residues 1–44; it reads MSGSDTAPFLSQADDTDDGPAPGTPGLPGSMGNPKSEDPAVPDQ. The next 12 helical transmembrane spans lie at 50 to 70, 98 to 118, 126 to 146, 160 to 180, 187 to 207, 218 to 238, 278 to 298, 323 to 343, 357 to 377, 381 to 401, 421 to 441, and 465 to 485; these read ITGLSSGHSALIVAVLCYINL, GLIQTVFISSYMVLAPVFGYL, YLMCGGIAFWSLVTLGSSFIP, VGVGEASYSTIAPTLIADLFV, MLSVFYFAIPVGSGLGYIAGS, WALRVTPGLGVLAVVLLFLVV, LGFTAVAFVTGSLALWAPAFL, LIFGLITCLTGVLGVGLGVEI, LVCAAGLLGSAPFLFLALACA, IVATYIFIFIGETLLSMNWAI, FQIVLSHLLGDAGSPYLIGSI, and MLCAFVGALGGAAFLGTAIFI. Serine 518 carries the phosphoserine modification.

The protein belongs to the major facilitator superfamily. Spinster (TC 2.A.1.49) family. Interacts with BCL2 and BCL2L1.

The protein localises to the lysosome membrane. The catalysed reaction is a 1-acyl-sn-glycero-3-phosphocholine(out) + H(+)(out) = a 1-acyl-sn-glycero-3-phosphocholine(in) + H(+)(in). The enzyme catalyses 1-hexadecanoyl-sn-glycero-3-phosphocholine(out) + H(+)(out) = 1-hexadecanoyl-sn-glycero-3-phosphocholine(in) + H(+)(in). It carries out the reaction 1-(9Z-octadecenoyl)-sn-glycero-3-phosphocholine(out) + H(+)(out) = 1-(9Z-octadecenoyl)-sn-glycero-3-phosphocholine(in) + H(+)(in). It catalyses the reaction 1-(5Z,8Z,11Z,14Z-eicosatetraenoyl)-sn-glycero-3-phosphocholine(out) + H(+)(out) = 1-(5Z,8Z,11Z,14Z-eicosatetraenoyl)-sn-glycero-3-phosphocholine(in) + H(+)(in). The catalysed reaction is 1-(4Z,7Z,10Z,13Z,16Z,19Z-docosahexaenoyl)-sn-glycero-3-phosphocholine(out) + H(+)(out) = 1-(4Z,7Z,10Z,13Z,16Z,19Z-docosahexaenoyl)-sn-glycero-3-phosphocholine(in) + H(+)(in). The enzyme catalyses a 1-acyl-sn-glycero-3-phosphoethanolamine(out) + H(+)(out) = a 1-acyl-sn-glycero-3-phosphoethanolamine(in) + H(+)(in). It carries out the reaction 1-(9Z-octadecenoyl)-sn-glycero-3-phosphoethanolamine(out) + H(+)(out) = 1-(9Z-octadecenoyl)-sn-glycero-3-phosphoethanolamine(in) + H(+)(in). It catalyses the reaction 1-acyl-sn-glycero-3-phospho-(1'-sn-glycerol)(out) + H(+)(out) = 1-acyl-sn-glycero-3-phospho-(1'-sn-glycerol)(in) + H(+)(in). The catalysed reaction is 1-(9Z-octadecenoyl)-sn-glycero-3-phospho-(1'-sn-glycerol)(out) + H(+)(out) = 1-(9Z-octadecenoyl)-sn-glycero-3-phospho-(1'-sn-glycerol)(in) + H(+)(in). The enzyme catalyses a 1-O-(1Z-alkenyl)-sn-glycero-3-phosphocholine(out) + H(+)(out) = a 1-O-(1Z-alkenyl)-sn-glycero-3-phosphocholine(in) + H(+)(in). It carries out the reaction 1-(1Z-hexadecenyl)-sn-glycero-3-phosphocholine(out) + H(+)(out) = 1-(1Z-hexadecenyl)-sn-glycero-3-phosphocholine(in) + H(+)(in). It catalyses the reaction a 1-O-(1Z-alkenyl)-sn-glycero-3-phosphoethanolamine(out) + H(+)(out) = a 1-O-(1Z-alkenyl)-sn-glycero-3-phosphoethanolamine(in) + H(+)(in). The catalysed reaction is 1-O-(1Z-hexadecenyl)-sn-glycero-3-phosphoethanolamine(out) + H(+)(out) = 1-O-(1Z-hexadecenyl)-sn-glycero-3-phosphoethanolamine(in) + H(+)(in). Its function is as follows. Plays a critical role in the phospholipid salvage pathway from lysosomes to the cytosol. Mediates the rate-limiting, proton-dependent, lysosomal efflux of lysophospholipids, which can then be reacylated by acyltransferases in the endoplasmic reticulum to form phospholipids. Selective for zwitterionic headgroups such as lysophosphatidylcholine (LPC) and lysophosphatidylethanolamine (LPE), can also transport lysophosphatidylglycerol (LPG), but not other anionic lysophospholipids, sphingosine, nor sphingomyelin. Transports lysophospholipids with saturated, monounsaturated, and polyunsaturated fatty acids, such as 1-hexadecanoyl-sn-glycero-3-phosphocholine, 1-(9Z-octadecenoyl)-sn-glycero-3-phosphocholine and 1-(4Z,7Z,10Z,13Z,16Z,19Z-docosahexaenoyl)-sn-glycero-3-phosphocholine, respectively. Can also transport lysoplasmalogen (LPC with a fatty alcohol) such as 1-(1Z-hexadecenyl)-sn-glycero-3-phosphocholine. Essential player in lysosomal homeostasis. Crucial for cell survival under conditions of nutrient limitation. May be involved in necrotic or autophagic cell death. The polypeptide is Protein spinster homolog 1 (SPNS1) (Bos taurus (Bovine)).